A 131-amino-acid polypeptide reads, in one-letter code: Small ribosomal subunit protein uS8c (131 aa).

It belongs to the universal ribosomal protein uS8 family. Part of the 30S ribosomal subunit.

It localises to the plastid. It is found in the chloroplast. One of the primary rRNA binding proteins, it binds directly to 16S rRNA central domain where it helps coordinate assembly of the platform of the 30S subunit. This chain is Small ribosomal subunit protein uS8c (rps8), found in Tupiella akineta (Green alga).